Reading from the N-terminus, the 165-residue chain is Small ribosomal subunit protein uS5 (165 aa).

The S5 DRBM domain maps to 13–76 (LEEKVLVVNR…EAAKKNLMKI (64 aa)).

It belongs to the universal ribosomal protein uS5 family. In terms of assembly, part of the 30S ribosomal subunit. Contacts proteins S4 and S8.

Functionally, with S4 and S12 plays an important role in translational accuracy. Its function is as follows. Located at the back of the 30S subunit body where it stabilizes the conformation of the head with respect to the body. The chain is Small ribosomal subunit protein uS5 from Chlamydia pneumoniae (Chlamydophila pneumoniae).